We begin with the raw amino-acid sequence, 1195 residues long: DNA-directed RNA polymerase subunit Rpo2 (1195 aa).

The segment covering 894 to 909 (LEEGEERLGPQRRRES) has biased composition (basic and acidic residues). The tract at residues 894-914 (LEEGEERLGPQRRRESSVTMR) is disordered. Residues Cys-1135, Cys-1140, Cys-1155, and Cys-1158 each contribute to the Zn(2+) site.

The protein belongs to the RNA polymerase beta chain family. As to quaternary structure, part of the RNA polymerase complex. It depends on Zn(2+) as a cofactor.

The protein resides in the cytoplasm. The catalysed reaction is RNA(n) + a ribonucleoside 5'-triphosphate = RNA(n+1) + diphosphate. In terms of biological role, DNA-dependent RNA polymerase (RNAP) catalyzes the transcription of DNA into RNA using the four ribonucleoside triphosphates as substrates. This subunit is involved in DNA promoter recognition. The chain is DNA-directed RNA polymerase subunit Rpo2 from Thermoplasma acidophilum (strain ATCC 25905 / DSM 1728 / JCM 9062 / NBRC 15155 / AMRC-C165).